We begin with the raw amino-acid sequence, 481 residues long: Aromatic amino acid aminotransferase C1773.13 (481 aa).

It belongs to the class-I pyridoxal-phosphate-dependent aminotransferase family. Requires pyridoxal 5'-phosphate as cofactor.

Its subcellular location is the cytoplasm. It carries out the reaction an aromatic L-alpha-amino acid + 2-oxoglutarate = an aromatic oxo-acid + L-glutamate. Has aromatic amino acid transaminase activity. The sequence is that of Aromatic amino acid aminotransferase C1773.13 from Schizosaccharomyces pombe (strain 972 / ATCC 24843) (Fission yeast).